A 129-amino-acid chain; its full sequence is Small ribosomal subunit protein uS8 (129 aa).

This sequence belongs to the universal ribosomal protein uS8 family. Part of the 30S ribosomal subunit. Contacts proteins S5 and S12.

Functionally, one of the primary rRNA binding proteins, it binds directly to 16S rRNA central domain where it helps coordinate assembly of the platform of the 30S subunit. This Bdellovibrio bacteriovorus (strain ATCC 15356 / DSM 50701 / NCIMB 9529 / HD100) protein is Small ribosomal subunit protein uS8.